We begin with the raw amino-acid sequence, 378 residues long: UDP-4-amino-4-deoxy-L-arabinose--oxoglutarate aminotransferase (378 aa).

At Lys182 the chain carries N6-(pyridoxal phosphate)lysine.

It belongs to the DegT/DnrJ/EryC1 family. ArnB subfamily. As to quaternary structure, homodimer. It depends on pyridoxal 5'-phosphate as a cofactor.

The enzyme catalyses UDP-4-amino-4-deoxy-beta-L-arabinose + 2-oxoglutarate = UDP-beta-L-threo-pentopyranos-4-ulose + L-glutamate. Its pathway is nucleotide-sugar biosynthesis; UDP-4-deoxy-4-formamido-beta-L-arabinose biosynthesis; UDP-4-deoxy-4-formamido-beta-L-arabinose from UDP-alpha-D-glucuronate: step 2/3. The protein operates within bacterial outer membrane biogenesis; lipopolysaccharide biosynthesis. Catalyzes the conversion of UDP-4-keto-arabinose (UDP-Ara4O) to UDP-4-amino-4-deoxy-L-arabinose (UDP-L-Ara4N). The modified arabinose is attached to lipid A and is required for resistance to polymyxin and cationic antimicrobial peptides. This Aeromonas hydrophila subsp. hydrophila (strain ATCC 7966 / DSM 30187 / BCRC 13018 / CCUG 14551 / JCM 1027 / KCTC 2358 / NCIMB 9240 / NCTC 8049) protein is UDP-4-amino-4-deoxy-L-arabinose--oxoglutarate aminotransferase.